The primary structure comprises 134 residues: TSC22 domain family protein 3 (134 aa).

Residue Met1 is modified to N-acetylmethionine. Residues Met1–Leu60 are AP1-binding. Ala42 and Val73 each carry phosphoserine. The segment at Leu76–Leu97 is leucine-zipper. Ser102 is modified (phosphoserine). Residues Lys108 to Val134 form a disordered region.

The protein belongs to the TSC-22/Dip/Bun family. As to quaternary structure, can form homodimers, however it is likely to function as a monomer. Interacts with NFKB1. Interacts (via N-terminus) with JUN and FOS; these interactions inhibit the binding of active AP1 to its target DNA. In terms of assembly, interacts with MYOD1. Interacts with HDAC1; this interaction affects HDAC1 activity on MYOG promoter and thus inhibits MYOD1 transcriptional activity. Ubiquitously expressed, including in the fetal brain and liver. Expressed in brain, lung, spleen and skeletal muscle. Lower levels detected in heart and kidney. Not detected in the pancreas. In non-lymphoid tissues, in the absence of inflammation, the major source of constitutive expression is the macrophage lineage. Also expressed in cells from different hemopoietic cell lineages, including bone marrow cells, CD34+ stem cells, mature B- and T-cells, monocytes and granulocytes. Down-regulated in activated macrophages from inflammatory lesions of delayed-type hypersensitivity (DTH) reactions, such as in tuberculosis and in Crohn disease, whereas in Burkitt lymphoma, persists in macrophages involved in the phagocytosis of apoptotic malignant cells.

Its subcellular location is the cytoplasm. The protein localises to the nucleus. In terms of biological role, protects T-cells from IL2 deprivation-induced apoptosis through the inhibition of FOXO3A transcriptional activity that leads to the down-regulation of the pro-apoptotic factor BCL2L11. In macrophages, plays a role in the anti-inflammatory and immunosuppressive effects of glucocorticoids and IL10. In T-cells, inhibits anti-CD3-induced NFKB1 nuclear translocation and thereby NFKB1 DNA-binding activities. In vitro, suppresses AP-1 transcription factor complex DNA-binding activities. Functionally, inhibits myogenic differentiation and mediates anti-myogenic effects of glucocorticoids by binding and regulating MYOD1 and HDAC1 transcriptional activity resulting in reduced expression of MYOG. The protein is TSC22 domain family protein 3 of Homo sapiens (Human).